A 358-amino-acid chain; its full sequence is Homoserine O-succinyltransferase (358 aa).

Cys-146 serves as the catalytic Acyl-thioester intermediate. Substrate contacts are provided by Lys-167 and Ser-196. The active-site Proton acceptor is the His-239. Glu-241 is an active-site residue. Residue Arg-253 coordinates substrate.

The protein belongs to the MetA family.

It is found in the cytoplasm. The catalysed reaction is L-homoserine + succinyl-CoA = O-succinyl-L-homoserine + CoA. The protein operates within amino-acid biosynthesis; L-methionine biosynthesis via de novo pathway; O-succinyl-L-homoserine from L-homoserine: step 1/1. Functionally, transfers a succinyl group from succinyl-CoA to L-homoserine, forming succinyl-L-homoserine. The protein is Homoserine O-succinyltransferase of Nitrosococcus oceani (strain ATCC 19707 / BCRC 17464 / JCM 30415 / NCIMB 11848 / C-107).